The sequence spans 259 residues: Glandular kallikrein-10 (259 aa).

The first 18 residues, 1–18 (MWFLILFLALSLGGIDAA), serve as a signal peptide directing secretion. A propeptide spans 19 to 24 (PPGQSR) (activation peptide). One can recognise a Peptidase S1 domain in the interval 25 to 256 (IVGGYKCEKN…FTSWIKEVMK (232 aa)). 5 disulfides stabilise this stretch: cysteine 31/cysteine 171, cysteine 48/cysteine 64, cysteine 150/cysteine 217, cysteine 182/cysteine 196, and cysteine 207/cysteine 232. Residue histidine 63 is the Charge relay system of the active site. Asparagine 91 and asparagine 106 each carry an N-linked (GlcNAc...) asparagine glycan. Catalysis depends on aspartate 118, which acts as the Charge relay system. Serine 211 (charge relay system) is an active-site residue.

It belongs to the peptidase S1 family. Kallikrein subfamily. Heterodimer of a light chain and heavy chain linked by a disulfide bond. Probably N- and O-glycosylated. Kidney and submandibular gland, where it is found in the granular convoluted tubule and striated duct cells. It is likely that the enzyme is mainly synthesized in the granular convoluted tubules and then transferred to other tissues by release into the vasculature or interstitial space.

The catalysed reaction is Preferential cleavage of Arg-|-Xaa bonds in small molecule substrates. Highly selective action to release kallidin (lysyl-bradykinin) from kininogen involves hydrolysis of Met-|-Xaa or Leu-|-Xaa.. Glandular kallikreins cleave Met-Lys and Arg-Ser bonds in kininogen to release Lys-bradykinin. This protein may be involved in the regulation of renal function. This is Glandular kallikrein-10 (Klk10) from Rattus norvegicus (Rat).